Here is a 436-residue protein sequence, read N- to C-terminus: Chromosomal replication initiator protein DnaA (436 aa).

A domain I, interacts with DnaA modulators region spans residues 1–69 (MLADEVLELL…AHLFEVKTGT (69 aa)). The interval 69-99 (TKPNVEITTQTKLKSSKQNQVNIKQIKAQST) is domain II. Residues 100-314 (LLNPAYTFEN…SAIINLNAYA (215 aa)) form a domain III, AAA+ region region. ATP is bound by residues Gly-144, Gly-146, Lys-147, and Thr-148. The segment at 315 to 436 (NLMRQEITLD…ELKNKILTKG (122 aa)) is domain IV, binds dsDNA.

The protein belongs to the DnaA family. In terms of assembly, oligomerizes as a right-handed, spiral filament on DNA at oriC.

The protein resides in the cytoplasm. Its function is as follows. Plays an essential role in the initiation and regulation of chromosomal replication. ATP-DnaA binds to the origin of replication (oriC) to initiate formation of the DNA replication initiation complex once per cell cycle. Binds the DnaA box (a 9 base pair repeat at the origin) and separates the double-stranded (ds)DNA. Forms a right-handed helical filament on oriC DNA; dsDNA binds to the exterior of the filament while single-stranded (ss)DNA is stabiized in the filament's interior. The ATP-DnaA-oriC complex binds and stabilizes one strand of the AT-rich DNA unwinding element (DUE), permitting loading of DNA polymerase. After initiation quickly degrades to an ADP-DnaA complex that is not apt for DNA replication. Binds acidic phospholipids. The chain is Chromosomal replication initiator protein DnaA from Campylobacter curvus (strain 525.92).